A 395-amino-acid chain; its full sequence is Chaperone protein DnaJ (395 aa).

A J domain is found at 4-69 (DYYEVLGVGR…DKRRRYDQFG (66 aa)). The segment at 152 to 233 (GVEKTLKIKK…CHGEGIKQGE (82 aa)) adopts a CR-type zinc-finger fold. Zn(2+)-binding residues include Cys-165, Cys-168, Cys-181, Cys-184, Cys-207, Cys-210, Cys-221, and Cys-224. 4 CXXCXGXG motif repeats span residues 165–172 (CDVCNGTG), 181–188 (CPTCQGTG), 207–214 (CPTCGGEG), and 221–228 (CTACHGEG).

The protein belongs to the DnaJ family. Homodimer. The cofactor is Zn(2+).

The protein resides in the cytoplasm. Functionally, participates actively in the response to hyperosmotic and heat shock by preventing the aggregation of stress-denatured proteins and by disaggregating proteins, also in an autonomous, DnaK-independent fashion. Unfolded proteins bind initially to DnaJ; upon interaction with the DnaJ-bound protein, DnaK hydrolyzes its bound ATP, resulting in the formation of a stable complex. GrpE releases ADP from DnaK; ATP binding to DnaK triggers the release of the substrate protein, thus completing the reaction cycle. Several rounds of ATP-dependent interactions between DnaJ, DnaK and GrpE are required for fully efficient folding. Also involved, together with DnaK and GrpE, in the DNA replication of plasmids through activation of initiation proteins. The protein is Chaperone protein DnaJ of Prosthecochloris aestuarii (strain DSM 271 / SK 413).